The sequence spans 228 residues: MLLYLPQIFSSRASSLLFLVPYLLFWENVASISTCAERDATIQHSLEKLLTLTTFMSHVMSIETAKLFTEFNNQYAQGKRYNDRIPGTCHTAFFDTPVNKEQSLGSDPKTLLKLVRSLLNSWTNALNHLVNEISAMQGDPSFLFSKAREIQAKFDELTTGVKTILSMIGERDNDTHLAWSGLSSLQSSNEDVRCFSFYTLIRCLLRDSRKVNTYLEVIKYQIFNQNNC.

A signal peptide spans 1–31 (MLLYLPQIFSSRASSLLFLVPYLLFWENVAS). 2 disulfide bridges follow: cysteine 89/cysteine 194 and cysteine 203/cysteine 228. Asparagine 173 carries an N-linked (GlcNAc...) asparagine glycan.

Belongs to the somatotropin/prolactin family. In terms of tissue distribution, expression restricted to the placenta in trophoblast cells within the labyrinth zone.

It is found in the secreted. In Rattus norvegicus (Rat), this protein is Prolactin-2B1 (Prl2b1).